We begin with the raw amino-acid sequence, 700 residues long: Protein UL29/28 (700 aa).

The disordered stretch occupies residues 1-30 (MSGRRKGCSAATASSSSSSPPSRLPLPGHA). Residues 9–21 (SAATASSSSSSPP) are compositionally biased toward low complexity.

Belongs to the herpesviridae US22 family. Interacts with UL38 and host HDAC1; these interactions are necessary for the HDAC1 interaction with UL38. Interacts with host MTA2.

The protein localises to the virion. Its subcellular location is the host nucleus. The protein resides in the host cytoplasm. Contributes to activation of immediate-early gene expression. The sequence is that of Protein UL29/28 (UL29) from Human cytomegalovirus (strain Merlin) (HHV-5).